The chain runs to 731 residues: MSGVMTAVSNRWDPGVIRALAEARHGDAFAVLGAHRTDTGRVLRTYLPGAERVSAVLDDGQTIALEAGPEPGLFAGDLPAQGGYRLRIGWPGGEQDTADPYAFGPQLSDFDLHLISEGHHLQLADALGANVVEVDGVRGTRFAVWAPNASRVAVVGDFNSWDARRHPMRLRHQSGVWELFVPDVGPGAHYKYQLRGPHGHELPAKADPVARRAELAPGTASIVADPTPYQWSDDGWMATRARRQAHDAPMSVYEMHAGSWLREEGVDLDWDGLADRLIPYVADMGFTHVELMPVTEHPFGGSWGYQPLGLFAPTARFGTPDGFARFVDRCHREGIGVIVDWVPAHFPTDAHGLAHFDGTALYEHADPREGFHRDWNTLIYNHGRREVSGFLIASAMEFLQRYHVDGLRVDAVASMLYRDYSRNAGEWVPNIHGGRENYETIAFLRRLNALVREHTPGAVMIAEESTAFPGVTADVAHGGLGFHYKWNMGWMHDTLHYAGLDPIYRRYHHGELTFSMVYAYSERFVLPISHDEVVHGKGSLLGRMPGDDWQRFANLRAYLGFMFTHPGRKLLFMGCEFGQPTEWNHDSGLPWHLLDDPRHRGVQTLVRDVNRLYVQYPALHAHDDDPSGFAWVVGDDAGNSVVAFLRKGKRGDAPVLVVINFTPVVQHGYRIGVPQGGQWREVFNSDAGIYGGANLGNGGIVTAEQQSMHGHAHALPLLLPPLGAIVLTPPG.

The active-site Nucleophile is the Asp410. Glu463 acts as the Proton donor in catalysis.

The protein belongs to the glycosyl hydrolase 13 family. GlgB subfamily. Monomer.

The enzyme catalyses Transfers a segment of a (1-&gt;4)-alpha-D-glucan chain to a primary hydroxy group in a similar glucan chain.. Its pathway is glycan biosynthesis; glycogen biosynthesis. In terms of biological role, catalyzes the formation of the alpha-1,6-glucosidic linkages in glycogen by scission of a 1,4-alpha-linked oligosaccharide from growing alpha-1,4-glucan chains and the subsequent attachment of the oligosaccharide to the alpha-1,6 position. The chain is 1,4-alpha-glucan branching enzyme GlgB 2 from Xanthomonas oryzae pv. oryzae (strain MAFF 311018).